The chain runs to 209 residues: Ribosomal RNA large subunit methyltransferase E (209 aa).

S-adenosyl-L-methionine-binding residues include Gly63, Trp65, Asp83, Asp99, and Asp124. Lys164 functions as the Proton acceptor in the catalytic mechanism.

It belongs to the class I-like SAM-binding methyltransferase superfamily. RNA methyltransferase RlmE family.

It is found in the cytoplasm. It catalyses the reaction uridine(2552) in 23S rRNA + S-adenosyl-L-methionine = 2'-O-methyluridine(2552) in 23S rRNA + S-adenosyl-L-homocysteine + H(+). In terms of biological role, specifically methylates the uridine in position 2552 of 23S rRNA at the 2'-O position of the ribose in the fully assembled 50S ribosomal subunit. The protein is Ribosomal RNA large subunit methyltransferase E of Cronobacter sakazakii (strain ATCC BAA-894) (Enterobacter sakazakii).